The chain runs to 373 residues: Glutamate 5-kinase (373 aa).

An ATP-binding site is contributed by Lys15. Substrate is bound by residues Ser55, Asp142, and Asn154. ATP is bound by residues 174 to 175 (TD) and 216 to 222 (TGGMATK). A PUA domain is found at 281 to 359 (AGSIVVDAGA…SEIERILGFR (79 aa)).

Belongs to the glutamate 5-kinase family.

The protein resides in the cytoplasm. It catalyses the reaction L-glutamate + ATP = L-glutamyl 5-phosphate + ADP. The protein operates within amino-acid biosynthesis; L-proline biosynthesis; L-glutamate 5-semialdehyde from L-glutamate: step 1/2. In terms of biological role, catalyzes the transfer of a phosphate group to glutamate to form L-glutamate 5-phosphate. The sequence is that of Glutamate 5-kinase from Geobacter sp. (strain M21).